A 430-amino-acid polypeptide reads, in one-letter code: Probable aspartic-type endopeptidase ARB_07403 (430 aa).

An N-terminal signal peptide occupies residues 1 to 17 (MHVSTLLVAVLLPLALS). A propeptide spans 18–87 (KPTPRKKTGS…SKATAGSGKE (70 aa)) (activation peptide). The interval 66-105 (YHPQHISKLPGNSKATAGSGKEGVESQDEKGEVVNNPTNH) is disordered. Basic and acidic residues predominate over residues 87–97 (EGVESQDEKGE). In terms of domain architecture, Peptidase A1 spans 109–427 (FLSPVTIGGQ…DQRGPSISLA (319 aa)). Residue Asp125 is part of the active site. A glycan (N-linked (GlcNAc...) asparagine) is linked at Asn306. Asp314 is a catalytic residue.

It belongs to the peptidase A1 family.

The protein resides in the secreted. In terms of biological role, probable secreted aspartic-type endopeptidase which contributes to virulence. In Arthroderma benhamiae (strain ATCC MYA-4681 / CBS 112371) (Trichophyton mentagrophytes), this protein is Probable aspartic-type endopeptidase ARB_07403.